The following is a 148-amino-acid chain: Putative lysozyme C-2 (148 aa).

Residues 1-18 (MKALLVLGFLLLSASVQA) form the signal peptide. Residues 19–148 (KVFKHCELAR…LSGYIRNCGV (130 aa)) enclose the C-type lysozyme domain. 4 disulfides stabilise this stretch: cysteine 24/cysteine 146, cysteine 48/cysteine 134, cysteine 83/cysteine 99, and cysteine 95/cysteine 113. Residues glutamate 53 and aspartate 71 contribute to the active site.

This sequence belongs to the glycosyl hydrolase 22 family. In terms of assembly, monomer.

Its subcellular location is the secreted. The catalysed reaction is Hydrolysis of (1-&gt;4)-beta-linkages between N-acetylmuramic acid and N-acetyl-D-glucosamine residues in a peptidoglycan and between N-acetyl-D-glucosamine residues in chitodextrins.. In terms of biological role, lysozymes have primarily a bacteriolytic function; those in tissues and body fluids are associated with the monocyte-macrophage system and enhance the activity of immunoagents. In the intestine they may also have a digestive function. The sequence is that of Putative lysozyme C-2 (Lyz2) from Rattus norvegicus (Rat).